Here is a 1288-residue protein sequence, read N- to C-terminus: Vacuolating cytotoxin autotransporter (1288 aa).

The N-terminal stretch at 1–33 (MEIQQTHRKINRPLVSLVLAGALISAIPQESHA) is a signal peptide. Positions 326 to 377 (PPEGGYKDKPNSTTSQSGTKNDKKEISQNNNSNTEVINPPNNTQKTETEPTQ) are disordered. Positions 352–376 (SQNNNSNTEVINPPNNTQKTETEPT) are enriched in polar residues. Positions 1015 to 1288 (KYEKPTNVWA…ASNLGMRYSF (274 aa)) constitute an Autotransporter domain.

The protein resides in the periplasm. It is found in the secreted. The protein localises to the cell surface. It localises to the cell outer membrane. Functionally, induces vacuolation of eukaryotic cells. Causes ulceration and gastric lesions. This chain is Vacuolating cytotoxin autotransporter (vacA), found in Helicobacter pylori (strain J99 / ATCC 700824) (Campylobacter pylori J99).